Consider the following 194-residue polypeptide: Rho-related protein racC (194 aa).

Alanine 17, glycine 19, lysine 20, threonine 21, cysteine 22, glutamate 34, tyrosine 36, threonine 39, glycine 64, lysine 120, aspartate 122, alanine 163, and lysine 164 together coordinate GTP. Threonine 21 is a Mg(2+) binding site. 2 consecutive short sequence motifs (switch) follow at residues 30–41 and 61–79; these read RKFPEDYIPTVF and DTAG…YSSA. Threonine 39 lines the Mg(2+) pocket. The residue at position 191 (cysteine 191) is a Cysteine methyl ester. Cysteine 191 is lipidated: S-geranylgeranyl cysteine. A propeptide spans 192-194 (removed in mature form); it reads ALL.

This sequence belongs to the small GTPase superfamily. Rho family. As to quaternary structure, interacts (GTP-bound form) with PAK4 (via CRIB domain). Interacts (GTP-bound form) with PAK5 (via CRIB domain). Mg(2+) serves as cofactor.

It is found in the cell membrane. The protein localises to the cytoplasm. Its subcellular location is the cytoskeleton. It catalyses the reaction GTP + H2O = GDP + phosphate + H(+). Regulated by guanine nucleotide exchange factors (GEFs) which promote the exchange of bound GDP for free GTP, GTPase activating proteins (GAPs) which increase the GTP hydrolysis activity, and GDP dissociation inhibitors which inhibit the dissociation of the nucleotide from the GTPase. Small GTPase which cycles between active GTP-bound and inactive GDP-bound states. The polypeptide is Rho-related protein racC (Entamoeba histolytica (strain ATCC 30459 / HM-1:IMSS / ABRM)).